Reading from the N-terminus, the 488-residue chain is uncharacterized protein (488 aa).

Helical transmembrane passes span Phe2–Val22, Val27–Ser47, Phe59–Val79, Leu106–Leu126, Ile176–Leu196, Leu241–Val261, Ile275–Tyr295, Val314–Leu334, Ile347–Phe367, Ile368–Ala388, Val438–Phe458, and Asp461–Ile481.

It belongs to the GntP permease family.

It localises to the cell inner membrane. This is an uncharacterized protein from Haemophilus influenzae (strain ATCC 51907 / DSM 11121 / KW20 / Rd).